The chain runs to 164 residues: 2-C-methyl-D-erythritol 2,4-cyclodiphosphate synthase (164 aa).

The a divalent metal cation site is built by Asp-9 and His-11. 4-CDP-2-C-methyl-D-erythritol 2-phosphate contacts are provided by residues 9-11 (DVH) and 35-36 (HS). Residue His-43 coordinates a divalent metal cation. Residues 57–59 (DIG), 62–66 (FPDTD), 133–136 (TTTE), Phe-140, and Arg-143 contribute to the 4-CDP-2-C-methyl-D-erythritol 2-phosphate site.

This sequence belongs to the IspF family. In terms of assembly, homotrimer. A divalent metal cation serves as cofactor.

The enzyme catalyses 4-CDP-2-C-methyl-D-erythritol 2-phosphate = 2-C-methyl-D-erythritol 2,4-cyclic diphosphate + CMP. The protein operates within isoprenoid biosynthesis; isopentenyl diphosphate biosynthesis via DXP pathway; isopentenyl diphosphate from 1-deoxy-D-xylulose 5-phosphate: step 4/6. Functionally, involved in the biosynthesis of isopentenyl diphosphate (IPP) and dimethylallyl diphosphate (DMAPP), two major building blocks of isoprenoid compounds. Catalyzes the conversion of 4-diphosphocytidyl-2-C-methyl-D-erythritol 2-phosphate (CDP-ME2P) to 2-C-methyl-D-erythritol 2,4-cyclodiphosphate (ME-CPP) with a corresponding release of cytidine 5-monophosphate (CMP). In Syntrophotalea carbinolica (strain DSM 2380 / NBRC 103641 / GraBd1) (Pelobacter carbinolicus), this protein is 2-C-methyl-D-erythritol 2,4-cyclodiphosphate synthase.